Here is a 383-residue protein sequence, read N- to C-terminus: 1-deoxy-D-xylulose 5-phosphate reductoisomerase (383 aa).

Positions 10, 11, 12, 13, 36, 37, 38, and 122 each coordinate NADPH. Position 123 (lysine 123) interacts with 1-deoxy-D-xylulose 5-phosphate. Residue glutamate 124 coordinates NADPH. Position 148 (aspartate 148) interacts with Mn(2+). 1-deoxy-D-xylulose 5-phosphate-binding residues include serine 149, glutamate 150, serine 174, and histidine 197. Mn(2+) is bound at residue glutamate 150. An NADPH-binding site is contributed by glycine 203. Serine 210, asparagine 215, lysine 216, and glutamate 219 together coordinate 1-deoxy-D-xylulose 5-phosphate. Glutamate 219 is a binding site for Mn(2+).

This sequence belongs to the DXR family. Mg(2+) is required as a cofactor. It depends on Mn(2+) as a cofactor.

It catalyses the reaction 2-C-methyl-D-erythritol 4-phosphate + NADP(+) = 1-deoxy-D-xylulose 5-phosphate + NADPH + H(+). It participates in isoprenoid biosynthesis; isopentenyl diphosphate biosynthesis via DXP pathway; isopentenyl diphosphate from 1-deoxy-D-xylulose 5-phosphate: step 1/6. Its function is as follows. Catalyzes the NADPH-dependent rearrangement and reduction of 1-deoxy-D-xylulose-5-phosphate (DXP) to 2-C-methyl-D-erythritol 4-phosphate (MEP). The protein is 1-deoxy-D-xylulose 5-phosphate reductoisomerase of Bacillus licheniformis (strain ATCC 14580 / DSM 13 / JCM 2505 / CCUG 7422 / NBRC 12200 / NCIMB 9375 / NCTC 10341 / NRRL NRS-1264 / Gibson 46).